Consider the following 384-residue polypeptide: Glycerol 3-phosphate oxidase (384 aa).

The first 17 residues, 1 to 17 (MQTIDVLIVGGGVIGTS), serve as a signal peptide directing secretion. Ile14 contributes to the FAD binding site. Cys18 carries the N-palmitoyl cysteine lipid modification. Residue Cys18 is the site of S-diacylglycerol cysteine attachment. Residues Glu33, 42 to 43 (TS), and 47 to 49 (SGV) each bind FAD. Sn-glycerol 3-phosphate is bound by residues Ser47 and His51. His51 acts as the Proton acceptor in catalysis. Val177 serves as a coordination point for FAD. Residues Lys258 and Arg320 each coordinate sn-glycerol 3-phosphate. 346–347 (MK) contacts FAD. Ser348 lines the sn-glycerol 3-phosphate pocket. Thr352 is an FAD binding site.

As to quaternary structure, monomer. It depends on FAD as a cofactor.

The protein localises to the cytoplasm. It is found in the cell membrane. The catalysed reaction is sn-glycerol 3-phosphate + O2 = dihydroxyacetone phosphate + H2O2. It functions in the pathway polyol metabolism; glycerol degradation via glycerol kinase pathway; glycerone phosphate from sn-glycerol 3-phosphate (aerobic route): step 1/1. In terms of biological role, catalyzes the oxidation of glycerol 3-phosphate to dihydroxyacetone phosphate (DHAP), with a reduction of O2 to H2O2. The formation of hydrogen peroxide by this enzyme is crucial for cytotoxic effects on host cells. Does not show any dehydrogenase activity with NAD(+). This is Glycerol 3-phosphate oxidase from Mycoplasma genitalium (strain ATCC 33530 / DSM 19775 / NCTC 10195 / G37) (Mycoplasmoides genitalium).